Consider the following 134-residue polypeptide: Mediator of RNA polymerase II transcription subunit 10 (134 aa).

This sequence belongs to the Mediator complex subunit 10 family. Component of the Mediator complex.

It is found in the nucleus. Functionally, component of the Mediator complex, a coactivator involved in the regulated transcription of nearly all RNA polymerase II-dependent genes. Mediator functions as a bridge to convey information from gene-specific regulatory proteins to the basal RNA polymerase II transcription machinery. Mediator is recruited to promoters by direct interactions with regulatory proteins and serves as a scaffold for the assembly of a functional preinitiation complex with RNA polymerase II and the general transcription factors. Negatively regulates the Wnt signaling pathway and positively regulates the Nodal signaling pathway. Required for cardiac cushion formation. This is Mediator of RNA polymerase II transcription subunit 10 (med10) from Danio rerio (Zebrafish).